The sequence spans 323 residues: Malate dehydrogenase (323 aa).

11-17 (GAAGQIA) contacts NAD(+). Substrate contacts are provided by R92 and R98. NAD(+) is bound by residues N105, Q112, and 129–131 (VGN). N131 and R162 together coordinate substrate. Catalysis depends on H187, which acts as the Proton acceptor.

Belongs to the LDH/MDH superfamily. MDH type 2 family.

The catalysed reaction is (S)-malate + NAD(+) = oxaloacetate + NADH + H(+). Catalyzes the reversible oxidation of malate to oxaloacetate. This chain is Malate dehydrogenase, found in Corynebacterium efficiens (strain DSM 44549 / YS-314 / AJ 12310 / JCM 11189 / NBRC 100395).